Here is a 470-residue protein sequence, read N- to C-terminus: Argininosuccinate lyase (470 aa).

Belongs to the lyase 1 family. Argininosuccinate lyase subfamily.

The protein resides in the cytoplasm. It carries out the reaction 2-(N(omega)-L-arginino)succinate = fumarate + L-arginine. The protein operates within amino-acid biosynthesis; L-arginine biosynthesis; L-arginine from L-ornithine and carbamoyl phosphate: step 3/3. This Mycobacterium tuberculosis (strain ATCC 25618 / H37Rv) protein is Argininosuccinate lyase.